A 191-amino-acid chain; its full sequence is Ribonuclease HII (191 aa).

The RNase H type-2 domain maps to I7–K191. A divalent metal cation is bound by residues D13, E14, and D103.

The protein belongs to the RNase HII family. The cofactor is Mn(2+). Mg(2+) is required as a cofactor.

It localises to the cytoplasm. The catalysed reaction is Endonucleolytic cleavage to 5'-phosphomonoester.. In terms of biological role, endonuclease that specifically degrades the RNA of RNA-DNA hybrids. The polypeptide is Ribonuclease HII (Legionella pneumophila subsp. pneumophila (strain Philadelphia 1 / ATCC 33152 / DSM 7513)).